The primary structure comprises 113 residues: Large ribosomal subunit protein bL19 (113 aa).

It belongs to the bacterial ribosomal protein bL19 family.

Its function is as follows. This protein is located at the 30S-50S ribosomal subunit interface and may play a role in the structure and function of the aminoacyl-tRNA binding site. This is Large ribosomal subunit protein bL19 from Corynebacterium efficiens (strain DSM 44549 / YS-314 / AJ 12310 / JCM 11189 / NBRC 100395).